Reading from the N-terminus, the 49-residue chain is Large ribosomal subunit protein bL33 (49 aa).

Belongs to the bacterial ribosomal protein bL33 family.

This is Large ribosomal subunit protein bL33 from Lachnoclostridium phytofermentans (strain ATCC 700394 / DSM 18823 / ISDg) (Clostridium phytofermentans).